The following is a 314-amino-acid chain: Torsin-2A (314 aa).

An N-terminal signal peptide occupies residues 1 to 19 (MAVRWWIIPMLLLVPGSSG). 86 to 93 (GWSGTGKT) provides a ligand contact to ATP. Asn-142 and Asn-283 each carry an N-linked (GlcNAc...) asparagine glycan.

It belongs to the ClpA/ClpB family. Torsin subfamily. In terms of assembly, homohexamer.

It is found in the endoplasmic reticulum lumen. The sequence is that of Torsin-2A (tor2a) from Xenopus laevis (African clawed frog).